Here is a 161-residue protein sequence, read N- to C-terminus: Nucleotide-binding protein PputW619_0959 (161 aa).

This sequence belongs to the YajQ family.

Its function is as follows. Nucleotide-binding protein. The polypeptide is Nucleotide-binding protein PputW619_0959 (Pseudomonas putida (strain W619)).